The primary structure comprises 246 residues: Transmembrane protein 41 homolog (246 aa).

6 consecutive transmembrane segments (helical) span residues 12–32 (WLVL…YSNF), 68–88 (SVVL…AIPG), 101–123 (PFYV…CYTI), 159–179 (IFLR…SPVL), 182–202 (PLAP…FLYI), and 219–239 (SWSS…PILL).

Belongs to the TMEM41 family.

It is found in the membrane. The protein is Transmembrane protein 41 homolog (tag-175) of Caenorhabditis elegans.